The primary structure comprises 445 residues: Tubulin beta chain (445 aa).

Glutamine 11, glutamate 69, serine 138, glycine 142, threonine 143, glycine 144, asparagine 204, and asparagine 226 together coordinate GTP. Glutamate 69 lines the Mg(2+) pocket.

It belongs to the tubulin family. As to quaternary structure, dimer of alpha and beta chains. A typical microtubule is a hollow water-filled tube with an outer diameter of 25 nm and an inner diameter of 15 nM. Alpha-beta heterodimers associate head-to-tail to form protofilaments running lengthwise along the microtubule wall with the beta-tubulin subunit facing the microtubule plus end conferring a structural polarity. Microtubules usually have 13 protofilaments but different protofilament numbers can be found in some organisms and specialized cells. Mg(2+) is required as a cofactor.

Its subcellular location is the cytoplasm. The protein resides in the cytoskeleton. Functionally, tubulin is the major constituent of microtubules, a cylinder consisting of laterally associated linear protofilaments composed of alpha- and beta-tubulin heterodimers. Microtubules grow by the addition of GTP-tubulin dimers to the microtubule end, where a stabilizing cap forms. Below the cap, tubulin dimers are in GDP-bound state, owing to GTPase activity of alpha-tubulin. The sequence is that of Tubulin beta chain (TUB-2) from Schizophyllum commune (Split gill fungus).